The chain runs to 418 residues: Nuclear hormone receptor 114 (418 aa).

A DNA-binding region (nuclear receptor) is located at residues 12-87 (DHVCLVCQDF…VGMDRNALQQ (76 aa)). 2 consecutive NR C4-type zinc fingers follow at residues 15 to 35 (CLVC…CVGC) and 51 to 70 (CQFE…CRYC). A disordered region spans residues 89–130 (RDPIGYTKRTRRPKKELKTTSDCSSDEGASTPPSVSPLQLSP). Residues 170-409 (PIRSLHEALC…AFARQLFFGD (240 aa)) form the NR LBD domain. Residues 398–409 (FSAFARQLFFGD) form an AF-2 region.

This sequence belongs to the nuclear hormone receptor family. In terms of tissue distribution, expressed in germ and intestinal cells and at low levels in the hypodermis.

It localises to the nucleus. Probable transcription factor which may have a role in detoxifying dietary metabolites arising from bacterial tryptophan metabolism. Required for fertility and involved in proper postembryonic germline development, especially germline stem cell (GSC) proliferation. Required for activation of the methionine/S-adenosylmethionine (Met/SAM) cycle in response to low levels of SAM. This is Nuclear hormone receptor 114 from Caenorhabditis elegans.